A 90-amino-acid chain; its full sequence is Auxin-responsive protein SAUR24 (90 aa).

This sequence belongs to the ARG7 family.

It localises to the cell membrane. Functionally, functions as a positive effector of cell expansion through modulation of auxin transport. This chain is Auxin-responsive protein SAUR24, found in Arabidopsis thaliana (Mouse-ear cress).